Reading from the N-terminus, the 193-residue chain is Ion-translocating oxidoreductase complex subunit B (193 aa).

A hydrophobic region spans residues 1–26 (MSTMLIAVILLTLLALFFGVLLGFAA). The region spanning 32 to 90 (EGNPIVDELEAILPQTQCGQCGYPGCRPYAEAIANGDKVNKCPPGGTATMEKLASLMGV) is the 4Fe-4S domain. Residues cysteine 49, cysteine 52, cysteine 57, cysteine 73, cysteine 114, cysteine 117, cysteine 120, cysteine 124, cysteine 144, cysteine 147, cysteine 150, and cysteine 154 each coordinate [4Fe-4S] cluster. 2 consecutive 4Fe-4S ferredoxin-type domains span residues 105 to 134 (KVAY…GAGK) and 136 to 164 (MHTV…MVPV).

Belongs to the 4Fe4S bacterial-type ferredoxin family. RnfB subfamily. As to quaternary structure, the complex is composed of six subunits: RnfA, RnfB, RnfC, RnfD, RnfE and RnfG. It depends on [4Fe-4S] cluster as a cofactor.

Its subcellular location is the cell inner membrane. Functionally, part of a membrane-bound complex that couples electron transfer with translocation of ions across the membrane. The polypeptide is Ion-translocating oxidoreductase complex subunit B (Shewanella oneidensis (strain ATCC 700550 / JCM 31522 / CIP 106686 / LMG 19005 / NCIMB 14063 / MR-1)).